The following is a 351-amino-acid chain: Heat-inducible transcription repressor HrcA (351 aa).

The protein belongs to the HrcA family.

Negative regulator of class I heat shock genes (grpE-dnaK-dnaJ and groELS operons). Prevents heat-shock induction of these operons. This is Heat-inducible transcription repressor HrcA from Acetivibrio thermocellus (strain ATCC 27405 / DSM 1237 / JCM 9322 / NBRC 103400 / NCIMB 10682 / NRRL B-4536 / VPI 7372) (Clostridium thermocellum).